Here is a 90-residue protein sequence, read N- to C-terminus: DNA-directed RNA polymerase subunit omega (90 aa).

Belongs to the RNA polymerase subunit omega family. The RNAP catalytic core consists of 2 alpha, 1 beta, 1 beta' and 1 omega subunit. When a sigma factor is associated with the core the holoenzyme is formed, which can initiate transcription.

The enzyme catalyses RNA(n) + a ribonucleoside 5'-triphosphate = RNA(n+1) + diphosphate. Functionally, promotes RNA polymerase assembly. Latches the N- and C-terminal regions of the beta' subunit thereby facilitating its interaction with the beta and alpha subunits. The protein is DNA-directed RNA polymerase subunit omega of Alteromonas mediterranea (strain DSM 17117 / CIP 110805 / LMG 28347 / Deep ecotype).